Consider the following 184-residue polypeptide: Mediator of RNA polymerase II transcription subunit 11 (184 aa).

Residues 142–152 (ATTKQETNINN) show a composition bias toward polar residues. Residues 142–184 (ATTKQETNINNEDSEKEKQENITAIETKKESSENEDEDFDMIA) are disordered. The span at 154–173 (DSEKEKQENITAIETKKESS) shows a compositional bias: basic and acidic residues. A compositionally biased stretch (acidic residues) spans 174-184 (ENEDEDFDMIA).

It belongs to the Mediator complex subunit 11 family. In terms of assembly, component of the Mediator complex.

The protein resides in the nucleus. Functionally, component of the Mediator complex, a coactivator involved in the regulated transcription of nearly all RNA polymerase II-dependent genes. Mediator functions as a bridge to convey information from gene-specific regulatory proteins to the basal RNA polymerase II transcription machinery. Mediator is recruited to promoters by direct interactions with regulatory proteins and serves as a scaffold for the assembly of a functional pre-initiation complex with RNA polymerase II and the general transcription factors. The polypeptide is Mediator of RNA polymerase II transcription subunit 11 (MED11) (Debaryomyces hansenii (strain ATCC 36239 / CBS 767 / BCRC 21394 / JCM 1990 / NBRC 0083 / IGC 2968) (Yeast)).